A 402-amino-acid polypeptide reads, in one-letter code: N-acetyltransferase Eis (402 aa).

The 152-residue stretch at 3–154 (VTLCSPTEDD…RFARFHADAP (152 aa)) folds into the N-acetyltransferase domain. Residues 85-87 (VAV), 93-98 (RRGLLR), and 121-122 (SE) contribute to the acetyl-CoA site. The Proton donor role is filled by Tyr-126. Catalysis depends on Phe-402, which acts as the Proton acceptor; via carboxylate.

The protein belongs to the acetyltransferase Eis family. Homohexamer; trimer of dimers.

It localises to the secreted. It is found in the host cytoplasmic vesicle. Its subcellular location is the host phagosome. The protein resides in the extracellular vesicle. The protein localises to the bacterial extracellular vesicle. It localises to the host extracellular space. It carries out the reaction L-lysyl-[protein] + acetyl-CoA = N(6)-acetyl-L-lysyl-[protein] + CoA + H(+). Its function is as follows. Effector that is released into the host cell and affects host immune responses. Acts as an acetyltransferase that acetylates lysine residues of host proteins. This is N-acetyltransferase Eis from Mycobacterium bovis (strain ATCC BAA-935 / AF2122/97).